A 60-amino-acid chain; its full sequence is Large ribosomal subunit protein uL30 (60 aa).

Belongs to the universal ribosomal protein uL30 family. In terms of assembly, part of the 50S ribosomal subunit.

In Nocardioides sp. (strain ATCC BAA-499 / JS614), this protein is Large ribosomal subunit protein uL30.